The primary structure comprises 453 residues: Na(+)/H(+) antiporter NhaA 2 (453 aa).

Transmembrane regions (helical) follow at residues 32 to 52, 71 to 91, 109 to 129, 140 to 160, 169 to 189, 193 to 213, 232 to 252, 284 to 304, 310 to 330, 356 to 376, and 382 to 402; these read GALL…PGAA, LSLA…VAGL, AVPI…YVLI, GWAI…AVIG, VFLL…IAVF, NLSV…AILL, ALVH…ALVV, AVPV…GGLV, PVAI…VIAV, MLAG…FAAG, and HVKI…AVIL. Residues 409 to 453 form a disordered region; that stretch reads GSRGNDATTRDPDQTRVGTATQRTTPDHPTPAATDANQPARSPAP.

It belongs to the NhaA Na(+)/H(+) (TC 2.A.33) antiporter family.

It is found in the cell membrane. The catalysed reaction is Na(+)(in) + 2 H(+)(out) = Na(+)(out) + 2 H(+)(in). Na(+)/H(+) antiporter that extrudes sodium in exchange for external protons. This Salinispora tropica (strain ATCC BAA-916 / DSM 44818 / JCM 13857 / NBRC 105044 / CNB-440) protein is Na(+)/H(+) antiporter NhaA 2.